We begin with the raw amino-acid sequence, 461 residues long: CASP-like protein 4U1 (461 aa).

Positions 1–239 (MASTPRTPAP…RAAETKLPLS (239 aa)) are disordered. Residues 1–314 (MASTPRTPAP…AAVAVGERRE (314 aa)) lie on the Cytoplasmic side of the membrane. The span at 7–69 (TPAPVRSPPP…PLETPPPPSP (63 aa)) shows a compositional bias: pro residues. Low complexity-rich tracts occupy residues 116–126 (LSPMRLAAPRL) and 135–155 (TPTG…AAAG). Positions 193–204 (SPSPSPTPPSPL) are enriched in pro residues. Residues 205 to 221 (TPAAAPVVNNNSNNKNN) are compositionally biased toward low complexity. A helical transmembrane segment spans residues 315–335 (LSVTLRLATAVLSLAAFSVIA). At 336-354 (SARTSGWAGDYYAHHLQYR) the chain is on the extracellular side. The helical transmembrane segment at 355–375 (YAVAVNVIVCAYSIAQSFGEI) threads the bilayer. At 376–392 (RRLISPRFIFRSMSSYY) the chain is on the cytoplasmic side. The helical transmembrane segment at 393–413 (CSLFLDQALAYLLMSASSAAA) threads the bilayer. Topologically, residues 414 to 431 (SRNDLWVSRFGTDAFNRK) are extracellular. Residues 432 to 452 (ITSALWLSFIAFLMLALNALI) traverse the membrane as a helical segment. At 453-461 (STANLFSML) the chain is on the cytoplasmic side.

Belongs to the Casparian strip membrane proteins (CASP) family. Homodimer and heterodimers.

It localises to the cell membrane. The sequence is that of CASP-like protein 4U1 from Sorghum bicolor (Sorghum).